A 335-amino-acid polypeptide reads, in one-letter code: Serpentine receptor class gamma-11 (335 aa).

Transmembrane regions (helical) follow at residues 33–53 (FLQI…LYTI), 66–86 (FFLI…LDII), 98–118 (PIIA…MIVL), 154–174 (LKYL…NLII), 202–222 (FQLI…SVIF), 242–262 (GTAY…LFAF), and 271–291 (TIFG…PIIM).

The protein belongs to the nematode receptor-like protein srg family.

The protein localises to the membrane. The sequence is that of Serpentine receptor class gamma-11 (srg-11) from Caenorhabditis elegans.